Here is a 341-residue protein sequence, read N- to C-terminus: Cell division protein FtsX (341 aa).

The disordered stretch occupies residues 1–34 (MSTTRTPKVSERVAPKPADPQPAKKKRGEDDDGP). At 1–65 (MSTTRTPKVS…RRLGKQPIGS (65 aa)) the chain is on the cytoplasmic side. The helical transmembrane segment at 66–86 (FFTCLVMAVALSMPMGLSLLL) threads the bilayer. The Periplasmic segment spans residues 87-212 (KNIEQLGGSW…LAAILKLGDR (126 aa)). The chain crosses the membrane as a helical span at residues 213 to 233 (FVFGLAVMLISALLLVIGNTI). The Cytoplasmic portion of the chain corresponds to 234-263 (RLHIENRRIEIEVIKLVGGTDAYVRRPFLY). A helical transmembrane segment spans residues 264-284 (MGALYGLGAGLLAWGILAFGL). Topologically, residues 285–311 (NWLNEAVVGLSGLYGSDFALGGVPASD) are periplasmic. Residues 312-332 (GLSLLIGAVLLGYIGAWIAVA) form a helical membrane-spanning segment. Topologically, residues 333–341 (RHLNELAPR) are cytoplasmic.

This sequence belongs to the ABC-4 integral membrane protein family. FtsX subfamily. As to quaternary structure, forms a membrane-associated complex with FtsE.

Its subcellular location is the cell inner membrane. Functionally, part of the ABC transporter FtsEX involved in cellular division. In Pseudomonas putida (Arthrobacter siderocapsulatus), this protein is Cell division protein FtsX.